A 142-amino-acid chain; its full sequence is MSVFNLTVVSAEQQIFSGQVESIQATGIEGELGILAGHTPLLTAIKPGIVKLTLEDGKEEVIYVSGGFLEVQPNVVTVLADTAIRGDELDGDRILAAKKRAEENIRTRHGDANYEMLASKLSKELAKLRAYELTEKLVKNKR.

Belongs to the ATPase epsilon chain family. As to quaternary structure, F-type ATPases have 2 components, CF(1) - the catalytic core - and CF(0) - the membrane proton channel. CF(1) has five subunits: alpha(3), beta(3), gamma(1), delta(1), epsilon(1). CF(0) has three main subunits: a, b and c.

Its subcellular location is the cell inner membrane. In terms of biological role, produces ATP from ADP in the presence of a proton gradient across the membrane. This is ATP synthase epsilon chain from Pasteurella multocida (strain Pm70).